The following is a 446-amino-acid chain: Phosphoglucosamine mutase (446 aa).

Serine 99 acts as the Phosphoserine intermediate in catalysis. The Mg(2+) site is built by serine 99, aspartate 242, aspartate 244, and aspartate 246. A Phosphoserine modification is found at serine 99.

The protein belongs to the phosphohexose mutase family. Mg(2+) is required as a cofactor. Activated by phosphorylation.

The enzyme catalyses alpha-D-glucosamine 1-phosphate = D-glucosamine 6-phosphate. Functionally, catalyzes the conversion of glucosamine-6-phosphate to glucosamine-1-phosphate. The chain is Phosphoglucosamine mutase from Campylobacter curvus (strain 525.92).